We begin with the raw amino-acid sequence, 440 residues long: Protein disulfide-isomerase 2-3 (440 aa).

Residues M1 to A24 form the signal peptide. Thioredoxin domains lie at L25–K136 and S154–E269. Catalysis depends on nucleophile residues C60 and C63. Residues C60 and C63 are joined by a disulfide bond. The tract at residues L143 to A163 is disordered. N-linked (GlcNAc...) asparagine glycosylation occurs at N168. Active-site nucleophile residues include C192 and C195. C192 and C195 are disulfide-bonded. A Prevents secretion from ER motif is present at residues K437–L440.

Belongs to the protein disulfide isomerase family. Widely expressed.

Its subcellular location is the endoplasmic reticulum lumen. The enzyme catalyses Catalyzes the rearrangement of -S-S- bonds in proteins.. Functionally, acts as a protein-folding catalyst that interacts with nascent polypeptides to catalyze the formation, isomerization, and reduction or oxidation of disulfide bonds. This chain is Protein disulfide-isomerase 2-3 (PDIL2-3), found in Arabidopsis thaliana (Mouse-ear cress).